Consider the following 177-residue polypeptide: Copper-binding regulatory protein cuf2 (177 aa).

The segment at residues 1–40 (MIIIDGKNYACVVCLRGHRGSSCQHQERALIEVRTRGRPL) is a DNA-binding region (copper-fist). Zn(2+)-binding residues include C11, C14, C23, and H25.

Its subcellular location is the nucleus. This is Copper-binding regulatory protein cuf2 (cuf2) from Schizosaccharomyces pombe (strain 972 / ATCC 24843) (Fission yeast).